The primary structure comprises 88 residues: Small ribosomal subunit protein uS17 (88 aa).

The protein belongs to the universal ribosomal protein uS17 family. As to quaternary structure, part of the 30S ribosomal subunit.

In terms of biological role, one of the primary rRNA binding proteins, it binds specifically to the 5'-end of 16S ribosomal RNA. In Pseudomonas fluorescens (strain SBW25), this protein is Small ribosomal subunit protein uS17.